Consider the following 260-residue polypeptide: Ribosomal protein L11 methyltransferase (260 aa).

S-adenosyl-L-methionine is bound by residues Thr119, Gly140, Asp162, and Asn203.

Belongs to the methyltransferase superfamily. PrmA family.

It is found in the cytoplasm. It carries out the reaction L-lysyl-[protein] + 3 S-adenosyl-L-methionine = N(6),N(6),N(6)-trimethyl-L-lysyl-[protein] + 3 S-adenosyl-L-homocysteine + 3 H(+). Functionally, methylates ribosomal protein L11. The protein is Ribosomal protein L11 methyltransferase of Thermosipho africanus (strain TCF52B).